Consider the following 58-residue polypeptide: Large ribosomal subunit protein bL32c (58 aa).

It belongs to the bacterial ribosomal protein bL32 family.

Its subcellular location is the plastid. It localises to the chloroplast. The polypeptide is Large ribosomal subunit protein bL32c (rpl32) (Adiantum capillus-veneris (Maidenhair fern)).